We begin with the raw amino-acid sequence, 307 residues long: ATP-dependent (S)-NAD(P)H-hydrate dehydratase (307 aa).

Residues 1-291 (MDHFIKLLPK…DEIPKLVRDV (291 aa)) form the YjeF C-terminal domain. (6S)-NADPHX is bound by residues glycine 96 and 150–156 (NIVEFSR). Residues 194 to 198 (KGEVD) and 214 to 223 (SSLRRCGGQG) each bind ATP. Aspartate 224 is a (6S)-NADPHX binding site.

Belongs to the NnrD/CARKD family. Mg(2+) serves as cofactor.

It carries out the reaction (6S)-NADHX + ATP = ADP + phosphate + NADH + H(+). The enzyme catalyses (6S)-NADPHX + ATP = ADP + phosphate + NADPH + H(+). Catalyzes the dehydration of the S-form of NAD(P)HX at the expense of ATP, which is converted to ADP. Together with NAD(P)HX epimerase, which catalyzes the epimerization of the S- and R-forms, the enzyme allows the repair of both epimers of NAD(P)HX, a damaged form of NAD(P)H that is a result of enzymatic or heat-dependent hydration. This chain is ATP-dependent (S)-NAD(P)H-hydrate dehydratase, found in Caenorhabditis elegans.